The following is a 309-amino-acid chain: Probable (S)-ureidoglycine aminohydrolase (309 aa).

The first 22 residues, 1-22 (MMLPRLLLLVVASALPLASVAA), serve as a signal peptide directing secretion. Residues E245, H247, H251, and Q285 each coordinate Mn(2+). E245 contributes to the substrate binding site. Substrate contacts are provided by Q285, Y297, and K301.

It belongs to the UGHY family. As to quaternary structure, homooctamer. Mn(2+) serves as cofactor.

Its subcellular location is the endoplasmic reticulum. The enzyme catalyses (S)-2-ureidoglycine + H2O = (S)-ureidoglycolate + NH4(+). In terms of biological role, involved in the catabolism of purine nucleotides. The sequential activity of AAH, UGLYAH and UAH allows a complete purine breakdown without the intermediate generation of urea. The polypeptide is Probable (S)-ureidoglycine aminohydrolase (UGLYAH) (Oryza sativa subsp. japonica (Rice)).